Consider the following 205-residue polypeptide: Probable GTP-binding protein EngB (205 aa).

One can recognise an EngB-type G domain in the interval 27-201 (TGIEIAFAGR…AAKLDFWFSP (175 aa)). Residues 35–42 (GRSNAGKS), 62–66 (GRTQL), 80–83 (DLPG), 147–150 (TKAD), and 180–182 (FSA) each bind GTP. 2 residues coordinate Mg(2+): Ser42 and Thr64.

It belongs to the TRAFAC class TrmE-Era-EngA-EngB-Septin-like GTPase superfamily. EngB GTPase family. It depends on Mg(2+) as a cofactor.

Its function is as follows. Necessary for normal cell division and for the maintenance of normal septation. The chain is Probable GTP-binding protein EngB from Haemophilus influenzae (strain 86-028NP).